The following is a 298-amino-acid chain: HTH-type transcriptional regulator YhaJ (298 aa).

Positions 7–64 (LTLEALRVMDAIDRRGSFAAAADELGRVPSALSYTMQKLEEELDVVLFDRSGHRTKFT) constitute an HTH lysR-type domain. Residues 24–43 (FAAAADELGRVPSALSYTMQ) constitute a DNA-binding region (H-T-H motif).

This sequence belongs to the LysR transcriptional regulatory family.

Its function is as follows. Positive regulator partially required for expression of genes in the locus of effacement (LEE) large pathogenicity island (PAI). Also partially responsible for expression of neighboring gene dlsT (yhaO) during late exponential growth. Binds to DNA of promoter 1 in LEE and DNA from the dlsT promoter region. The sequence is that of HTH-type transcriptional regulator YhaJ (yhaJ) from Escherichia coli O157:H7.